The chain runs to 178 residues: Adenine phosphoribosyltransferase (178 aa).

Belongs to the purine/pyrimidine phosphoribosyltransferase family. As to quaternary structure, homodimer.

It localises to the cytoplasm. The enzyme catalyses AMP + diphosphate = 5-phospho-alpha-D-ribose 1-diphosphate + adenine. Its pathway is purine metabolism; AMP biosynthesis via salvage pathway; AMP from adenine: step 1/1. Functionally, catalyzes a salvage reaction resulting in the formation of AMP, that is energically less costly than de novo synthesis. The sequence is that of Adenine phosphoribosyltransferase from Streptomyces clavuligerus.